The primary structure comprises 237 residues: MESYSQNSNKLDFQHEARILNGIWLITALGLVATAGLAWGAKYIEITATKYDSPPMYVAIGLLLLCMYGLSKDINKINAAIAGVIYLFLLSLVAIVVASLVPVYAIIIVFSTAGAMFLISMLAGLLFNVDPGSHRFIIMMTLTGLALVIIVNAALMSERPIWIISCLMIVLWSGIISHGRNKLLELAGKCHSEELWSPVRCAFTGALTLYYYFIGFFGILAAIAITLVWQRHTRFFH.

7 consecutive transmembrane segments (helical) span residues 19–39 (ILNG…GLAW), 51–71 (YDSP…YGLS), 81–101 (IAGV…ASLV), 106–126 (IIIV…AGLL), 136–156 (FIIM…AALM), 159–179 (RPIW…ISHG), and 209–229 (LYYY…TLVW).

It is found in the cell membrane. This is an uncharacterized protein from Escherichia coli (strain K12).